The primary structure comprises 423 residues: Calcium up-regulated protein A (423 aa).

Residues 1–19 (MINIEDISKSSNESEEKQL) show a composition bias toward basic and acidic residues. Residues 1-27 (MINIEDISKSSNESEEKQLKSTSTSSK) are disordered. 2 Ricin B-type lectin domains span residues 27 to 147 (KPKY…WTTF) and 118 to 251 (QGNG…WGIN).

Belongs to the cup family.

The protein localises to the cytoplasm. The protein resides in the membrane. Functionally, may play an important role in stabilizing and/or regulating the cell membrane during Ca(2+) stress or certain stages of development. This is Calcium up-regulated protein A (cupA) from Dictyostelium discoideum (Social amoeba).